Consider the following 354-residue polypeptide: Serum paraoxonase/lactonase 3 (354 aa).

Cysteines 42 and 352 form a disulfide. N-linked (GlcNAc...) asparagine glycosylation occurs at Asn-50. Glu-53 and Asp-54 together coordinate Ca(2+). His-114 (proton acceptor) is an active-site residue. Ile-116 serves as a coordination point for Ca(2+). Ser-165 is modified (phosphoserine). Ca(2+) contacts are provided by Asn-167, Asn-168, Asn-223, Asp-268, and Asn-269. Asn-269 is a glycosylation site (N-linked (GlcNAc...) asparagine).

The protein belongs to the paraoxonase family. Homodimer. Ca(2+) serves as cofactor. Post-translationally, glycosylated. In terms of processing, the signal sequence is not cleaved.

Its subcellular location is the secreted. It is found in the extracellular space. The enzyme catalyses a phenyl acetate + H2O = a phenol + acetate + H(+). It catalyses the reaction An aryl dialkyl phosphate + H2O = dialkyl phosphate + an aryl alcohol.. It carries out the reaction an N-acyl-L-homoserine lactone + H2O = an N-acyl-L-homoserine + H(+). Has low activity towards the organophosphate paraxon and aromatic carboxylic acid esters. Rapidly hydrolyzes lactones such as statin prodrugs (e.g. lovastatin). Hydrolyzes aromatic lactones and 5- or 6-member ring lactones with aliphatic substituents but not simple lactones or those with polar substituents. This chain is Serum paraoxonase/lactonase 3 (PON3), found in Oryctolagus cuniculus (Rabbit).